Consider the following 203-residue polypeptide: Putative 3-methyladenine DNA glycosylase (203 aa).

It belongs to the DNA glycosylase MPG family.

The chain is Putative 3-methyladenine DNA glycosylase from Clostridium botulinum (strain ATCC 19397 / Type A).